The primary structure comprises 1163 residues: Genome polyprotein (1163 aa).

The Cytoplasmic portion of the chain corresponds to 1–104 (MSGRKAQGKT…LSSRKRRSYE (104 aa)). Residues 38–72 (PGPSRGVQGFIFFFLFNVLTGRKITAHLKKLWRML) form a hydrophobic; homodimerization of capsid protein C region. The propeptide at 102–121 (SYEVLTVQFLILGMLLMTGG) is ER anchor for the capsid protein C, removed in mature form by serine protease NS3. The helical transmembrane segment at 105-125 (VLTVQFLILGMLLMTGGVTLV) threads the bilayer. Residues 126-244 (RKSRWLLLNV…GERQLQKIER (119 aa)) are Extracellular-facing. N-linked (GlcNAc...) asparagine; by host glycosylation is found at asparagine 134 and asparagine 150. The helical transmembrane segment at 245–265 (WLVRNPFFAVTALAIAYLVGS) threads the bilayer. The Cytoplasmic portion of the chain corresponds to 266–270 (NMTQR). The helical transmembrane segment at 271–285 (VVIALLVLAVGPAYS) threads the bilayer. Residues 286–730 (AHCIGITDRD…MVFGSAFQGL (445 aa)) lie on the Extracellular side of the membrane. 6 disulfides stabilise this stretch: cysteine 288/cysteine 315, cysteine 345/cysteine 406, cysteine 359/cysteine 390, cysteine 377/cysteine 401, cysteine 467/cysteine 568, and cysteine 585/cysteine 615. A fusion peptide region spans residues 383–396 (DRGWGNGCGLFGKG). Residues 731–751 (FGGLSWITKVIMGAVLIWVGI) form a helical membrane-spanning segment. Residues 752–757 (NMRNMT) are Extracellular-facing. Residues 758 to 778 (MSMSMILVGVIMMFLSLGVGA) traverse the membrane as a helical segment. Residues 779 to 1163 (DQGCAINFGK…RQGPKQILVG (385 aa)) lie on the Extracellular side of the membrane. 6 disulfide bridges follow: cysteine 782–cysteine 793, cysteine 833–cysteine 921, cysteine 957–cysteine 1002, cysteine 1058–cysteine 1107, cysteine 1069–cysteine 1091, and cysteine 1090–cysteine 1094. Asparagine 908 and asparagine 986 each carry an N-linked (GlcNAc...) asparagine; by host glycan.

Homodimer. Interacts (via N-terminus) with host EXOC1 (via C-terminus); this interaction results in EXOC1 degradation through the proteasome degradation pathway. In terms of assembly, forms heterodimers with envelope protein E in the endoplasmic reticulum and Golgi. As to quaternary structure, homodimer; in the endoplasmic reticulum and Golgi. Homodimer; Homohexamer when secreted. Interacts with envelope protein E. In terms of processing, specific enzymatic cleavages in vivo yield mature proteins. The nascent capsid protein C contains a C-terminal hydrophobic domain that act as a signal sequence for translocation of prM into the lumen of the ER. Mature capsid protein C is cleaved at a site upstream of this hydrophobic domain by NS3. prM is cleaved in post-Golgi vesicles by a host furin, releasing the mature small envelope protein M, and peptide pr. Non-structural protein 2A-alpha, a C-terminally truncated form of non-structural protein 2A, results from partial cleavage by NS3. Specific enzymatic cleavages in vivo yield mature proteins peptide 2K acts as a signal sequence and is removed from the N-terminus of NS4B by the host signal peptidase in the ER lumen. Signal cleavage at the 2K-4B site requires a prior NS3 protease-mediated cleavage at the 4A-2K site. Cleaved in post-Golgi vesicles by a host furin, releasing the mature small envelope protein M, and peptide pr. This cleavage is incomplete as up to 30% of viral particles still carry uncleaved prM. Post-translationally, N-glycosylated. In terms of processing, N-glycosylated. The excreted form is glycosylated and this is required for efficient secretion of the protein from infected cells.

The protein resides in the virion. The protein localises to the host nucleus. It is found in the host cytoplasm. Its subcellular location is the host perinuclear region. It localises to the secreted. The protein resides in the virion membrane. The protein localises to the host endoplasmic reticulum membrane. Functionally, plays a role in virus budding by binding to the cell membrane and gathering the viral RNA into a nucleocapsid that forms the core of a mature virus particle. During virus entry, may induce genome penetration into the host cytoplasm after hemifusion induced by the surface proteins. Can migrate to the cell nucleus where it modulates host functions. Inhibits RNA silencing by interfering with host Dicer. Its function is as follows. Prevents premature fusion activity of envelope proteins in trans-Golgi by binding to envelope protein E at pH6.0. After virion release in extracellular space, gets dissociated from E dimers. In terms of biological role, acts as a chaperone for envelope protein E during intracellular virion assembly by masking and inactivating envelope protein E fusion peptide. prM is the only viral peptide matured by host furin in the trans-Golgi network probably to avoid catastrophic activation of the viral fusion activity in acidic Golgi compartment prior to virion release. prM-E cleavage is inefficient, and many virions are only partially matured. These uncleaved prM would play a role in immune evasion. Functionally, may play a role in virus budding. Exerts cytotoxic effects by activating a mitochondrial apoptotic pathway through M ectodomain. May display a viroporin activity. Binds to host cell surface receptor and mediates fusion between viral and cellular membranes. Envelope protein is synthesized in the endoplasmic reticulum in the form of heterodimer with protein prM. They play a role in virion budding in the ER, and the newly formed immature particle is covered with 60 spikes composed of heterodimer between precursor prM and envelope protein E. The virion is transported to the Golgi apparatus where the low pH causes dissociation of PrM-E heterodimers and formation of E homodimers. prM-E cleavage is inefficient, and many virions are only partially matured. These uncleaved prM would play a role in immune evasion. Its function is as follows. Involved in immune evasion, pathogenesis and viral replication. Once cleaved off the polyprotein, is targeted to three destinations: the viral replication cycle, the plasma membrane and the extracellular compartment. Essential for viral replication. Required for formation of the replication complex and recruitment of other non-structural proteins to the ER-derived membrane structures. Excreted as a hexameric lipoparticle that plays a role against host immune response. Antagonizing the complement function. Binds to the host macrophages and dendritic cells. Inhibits signal transduction originating from Toll-like receptor 3 (TLR3). In terms of biological role, component of the viral RNA replication complex that functions in virion assembly and antagonizes the host immune response. In Aedes aegypti (Yellowfever mosquito), this protein is Genome polyprotein.